A 110-amino-acid chain; its full sequence is uncharacterized protein (110 aa).

2 disordered regions span residues 1–42 (MEWG…RAQQ) and 66–110 (RQLG…AAEP). Positions 36 to 68 (REERAQQLLDAVEQRQRQLLDTIAACEEMLRQL) form a coiled coil.

This is an uncharacterized protein from Homo sapiens (Human).